A 160-amino-acid chain; its full sequence is Large ribosomal subunit protein uL18 (160 aa).

The protein belongs to the universal ribosomal protein uL18 family. Part of the 50S ribosomal subunit. Contacts the 5S and 23S rRNAs.

Its function is as follows. This is one of the proteins that bind and probably mediate the attachment of the 5S RNA into the large ribosomal subunit, where it forms part of the central protuberance. The polypeptide is Large ribosomal subunit protein uL18 (Thermoplasma volcanium (strain ATCC 51530 / DSM 4299 / JCM 9571 / NBRC 15438 / GSS1)).